Consider the following 115-residue polypeptide: Phosphoribosyl-AMP cyclohydrolase (115 aa).

Residue Asp80 participates in Mg(2+) binding. Residue Cys81 coordinates Zn(2+). Mg(2+)-binding residues include Asp82 and Asp84. The Zn(2+) site is built by Cys97 and Cys104.

The protein belongs to the PRA-CH family. Homodimer. The cofactor is Mg(2+). Zn(2+) is required as a cofactor.

It localises to the cytoplasm. The catalysed reaction is 1-(5-phospho-beta-D-ribosyl)-5'-AMP + H2O = 1-(5-phospho-beta-D-ribosyl)-5-[(5-phospho-beta-D-ribosylamino)methylideneamino]imidazole-4-carboxamide. Its pathway is amino-acid biosynthesis; L-histidine biosynthesis; L-histidine from 5-phospho-alpha-D-ribose 1-diphosphate: step 3/9. In terms of biological role, catalyzes the hydrolysis of the adenine ring of phosphoribosyl-AMP. The polypeptide is Phosphoribosyl-AMP cyclohydrolase (Mycolicibacterium gilvum (strain PYR-GCK) (Mycobacterium gilvum (strain PYR-GCK))).